The chain runs to 446 residues: Exodeoxyribonuclease 7 large subunit (446 aa).

This sequence belongs to the XseA family. As to quaternary structure, heterooligomer composed of large and small subunits.

It is found in the cytoplasm. It catalyses the reaction Exonucleolytic cleavage in either 5'- to 3'- or 3'- to 5'-direction to yield nucleoside 5'-phosphates.. Its function is as follows. Bidirectionally degrades single-stranded DNA into large acid-insoluble oligonucleotides, which are then degraded further into small acid-soluble oligonucleotides. This Streptococcus pyogenes serotype M3 (strain ATCC BAA-595 / MGAS315) protein is Exodeoxyribonuclease 7 large subunit.